The chain runs to 343 residues: N-acetyl-gamma-glutamyl-phosphate reductase (343 aa).

Cysteine 146 is an active-site residue.

This sequence belongs to the NAGSA dehydrogenase family. Type 1 subfamily.

It localises to the cytoplasm. The enzyme catalyses N-acetyl-L-glutamate 5-semialdehyde + phosphate + NADP(+) = N-acetyl-L-glutamyl 5-phosphate + NADPH + H(+). It participates in amino-acid biosynthesis; L-arginine biosynthesis; N(2)-acetyl-L-ornithine from L-glutamate: step 3/4. Its function is as follows. Catalyzes the NADPH-dependent reduction of N-acetyl-5-glutamyl phosphate to yield N-acetyl-L-glutamate 5-semialdehyde. This chain is N-acetyl-gamma-glutamyl-phosphate reductase, found in Acidothermus cellulolyticus (strain ATCC 43068 / DSM 8971 / 11B).